A 314-amino-acid chain; its full sequence is Olfactory receptor 2W3 (314 aa).

At 1-25 (MDGTNGSTQTHFILLGFSDRPHLER) the chain is on the extracellular side. A glycan (N-linked (GlcNAc...) asparagine) is linked at asparagine 5. A helical membrane pass occupies residues 26 to 49 (ILFVVILIAYLLTLVGNTTIILVS). Topologically, residues 50-57 (RLDPHLHT) are cytoplasmic. A helical transmembrane segment spans residues 58–79 (PMYFFLAHLSFLDLSFTTSSIP). Topologically, residues 80 to 100 (QLLYNLNGCDKTISYMGCAIQ) are extracellular. Residues 101-120 (LFLFLGLGGVECLLLAVMAY) form a helical membrane-spanning segment. Over 121-139 (DRCVAICKPLHYMVIMNPR) the chain is Cytoplasmic. A helical transmembrane segment spans residues 140–158 (LCRGLVSVTWGCGVANSLA). Topologically, residues 159-195 (MSPVTLRLPRCGHHEVDHFLREMPALIRMACVSTVAI) are extracellular. Residues 196–219 (EGTVFVLAVGVVLSPLVFILLSYS) traverse the membrane as a helical segment. The Cytoplasmic segment spans residues 220 to 236 (YIVRAVLQIRSASGRQK). Residues 237–259 (AFGTCGSHLTVVSLFYGNIIYMY) form a helical membrane-spanning segment. Over 260-272 (MQPGASSSQDQGM) the chain is Extracellular. A helical membrane pass occupies residues 273 to 292 (FLMLFYNIVTPLLNPLIYTL). Over 293 to 314 (RNREVKGALGRLLLGKRELGKE) the chain is Cytoplasmic.

It belongs to the G-protein coupled receptor 1 family.

It localises to the cell membrane. In terms of biological role, odorant receptor. The sequence is that of Olfactory receptor 2W3 (OR2W3) from Homo sapiens (Human).